The following is a 142-amino-acid chain: Ribosome maturation factor RimP (142 aa).

The protein belongs to the RimP family.

It localises to the cytoplasm. In terms of biological role, required for maturation of 30S ribosomal subunits. The polypeptide is Ribosome maturation factor RimP (Sulfurovum sp. (strain NBC37-1)).